A 667-amino-acid polypeptide reads, in one-letter code: Gamma-tubulin complex component 4 (667 aa).

The disordered stretch occupies residues 425-445 (HKADATQAREGPSRETSPREA).

The protein belongs to the TUBGCP family. Component of the gamma-tubulin ring complex (gTuRC) consisting of TUBGCP2, TUBGCP3, TUBGCP4, TUBGCP5 and TUBGCP6 and gamma-tubulin TUBG1 or TUBG2. TUBGCP2, TUBGCP3, TUBGCP4, TUBGCP5 and TUBGCP6 assemble in a 5:5:2:1:1 stoichiometry; each is associated with a gamma-tubulin, thereby arranging 14 gamma-tubulins in a helical manner. Gamma-tubulin at the first position is blocked by TUBGCP3 at the last position, allowing 13 protafilaments to grow into a microtubule. The gTuRC (via TUBGCP3 and TUBGCP6) interacts with ACTB and MZT1; the interactions form a luminal bridge that stabilizes the initial structure during complex assembly. The gTuRC (via TUBGCP2) interacts with MZT2A/MZT2B and CDK5RAP2 (via CM1 motif); the interactions play a role in gTuRC activation. Interacts with NINL. Interacts with ATF5; the ATF5:PCNT:polyglutamylated tubulin (PGT) tripartite unites the mother centriole and the pericentriolar material (PCM) in the centrosome. Ubiquitously expressed.

The protein localises to the cytoplasm. It is found in the cytoskeleton. Its subcellular location is the microtubule organizing center. It localises to the centrosome. Functionally, component of the gamma-tubulin ring complex (gTuRC) which mediates microtubule nucleation. The gTuRC regulates the minus-end nucleation of alpha-beta tubulin heterodimers that grow into microtubule protafilaments, a critical step in centrosome duplication and spindle formation. In Homo sapiens (Human), this protein is Gamma-tubulin complex component 4 (TUBGCP4).